A 964-amino-acid polypeptide reads, in one-letter code: Probable outer membrane protein PmpE (964 aa).

A signal peptide spans 1–18; the sequence is MKKAFFFFLIGNSLSGLA. The Autotransporter domain occupies 683–964; the sequence is LTPSGHPFWG…YLNGEIALRF (282 aa).

This sequence belongs to the PMP outer membrane protein family.

The protein resides in the secreted. It is found in the cell wall. Its subcellular location is the cell outer membrane. The protein is Probable outer membrane protein PmpE (pmpE) of Chlamydia trachomatis serovar D (strain ATCC VR-885 / DSM 19411 / UW-3/Cx).